Here is a 902-residue protein sequence, read N- to C-terminus: MVPGLQVLLFLTLHLLQNTESSMVHLNSNGYEGVVIAINPSVPEDERLIPSIKEMVTQASTYLFEASQGRVYFRNISILVPMTWKSKPEYLMPKRESYDKADVIVADPHLQHGDDPYTLQYGQCGDRGQYIHFTPNFLLTDNLRIYGPRGRVFVHEWAHLRWGVFDEYNVDQPFYMSRKNTIEATRCSTRITGTNVVHNCERGNCVTRACRRDSKTRLYEPKCTFIPDKIQTAGASIMFMQNLNSVVEFCTEKNHNAEAPNLQNKMCNRRSTWDVIKTSADFQNAPPMRGTEAPPPPTFSLLKSRRRVVCLVLDKSGSMDKEDRLIRMNQAAELYLTQIVEKESMVGLVTFDSAAHIQNYLIKITSSSDYQKITANLPQQASGGTSICHGLQAGFQAITSSDQSTSGSEIVLLTDGEDNGIRSCFEAVSRSGAIIHTIALGPSAARELETLSDMTGGLRFYANKDLNSLIDAFSRISSTSGSVSQQALQLESKAFDVRAGAWINGTVPLDSTVGNDTFFVITWMVKKPEIILQDPKGKKYTTSDFQDDKLNIRSARLQIPGTAETGTWTYSITGTKSQLITMTVTTRARSPTMEPLLATAHMSQSTAQYPSRMIVYARVSQGFLPVLGANVTALIEAEHGHQVTLELWDNGAGADTVKNDGIYTRYFTDYHGNGRYSLKVRVQAQRNKTRLSLRQKNKSLYIPGYVENGKIVLNPPRPDVQEEAIEATVEDFNRVTSGGSFTVSGAPPDGDHARVFPPSKVTDLEAEFIGDYIHLTWTAPGKVLDNGRAHRYIIRMSQHPLDLQEDFNNATLVNASSLIPKEAGSKETFKFKPETFKIANGIQLYIAIQADNEASLTSEVSNIAQAVKLTSLEDSISALGDDISAISMTIWGLTVIFNSILN.

The signal sequence occupies residues 1–21 (MVPGLQVLLFLTLHLLQNTES). Positions 45–199 (DERLIPSIKE…RITGTNVVHN (155 aa)) are metalloprotease domain. Asparagine 75 carries N-linked (GlcNAc...) asparagine glycosylation. A Zn(2+)-binding site is contributed by histidine 155. Glutamate 156 is an active-site residue. Zn(2+) contacts are provided by histidine 159 and aspartate 166. The region spanning 308–476 (VVCLVLDKSG…NSLIDAFSRI (169 aa)) is the VWFA domain. Asparagine 504, asparagine 515, asparagine 630, asparagine 687, asparagine 697, asparagine 809, and asparagine 814 each carry an N-linked (GlcNAc...) asparagine glycan.

The protein belongs to the CLCR family. Part of a complex composed of complement component C3, CLCA1/CLCA3, A2ML1/OH and ALB/serum albumin. Glycosylated. Post-translationally, the 130-kDa product is autoproteolytically processed by the metalloprotease domain and yields two subunits, a 90-kDa protein and a group of 32- to 38-kDa proteins. The cleavage is necessary for calcium-activated chloride channel (CaCC) activation activity. Highly expressed in skin and spleen, and at lower levels in kidney and liver. Also detected in lung and brain. Not detected in lung or brain. In lung, localizes to respiratory epithelia of the bronchi and trachea and the submucosal glands.

It localises to the cell membrane. Plays a role in modulating chloride current across the plasma membrane in a calcium-dependent manner. The chain is Calcium-activated chloride channel regulator 3A-1 from Mus musculus (Mouse).